A 202-amino-acid polypeptide reads, in one-letter code: Probable molybdenum cofactor guanylyltransferase (202 aa).

GTP is bound by residues 9–11 (VAG), Lys22, Asn50, Asp77, and Asp102. Asp102 serves as a coordination point for Mg(2+).

It belongs to the MobA family. Requires Mg(2+) as cofactor.

It localises to the cytoplasm. It carries out the reaction Mo-molybdopterin + GTP + H(+) = Mo-molybdopterin guanine dinucleotide + diphosphate. Transfers a GMP moiety from GTP to Mo-molybdopterin (Mo-MPT) cofactor (Moco or molybdenum cofactor) to form Mo-molybdopterin guanine dinucleotide (Mo-MGD) cofactor. This is Probable molybdenum cofactor guanylyltransferase from Natronomonas pharaonis (strain ATCC 35678 / DSM 2160 / CIP 103997 / JCM 8858 / NBRC 14720 / NCIMB 2260 / Gabara) (Halobacterium pharaonis).